The sequence spans 473 residues: Photosystem II CP43 reaction center protein (473 aa).

A propeptide spanning residues 1 to 14 (MKTLYSLRRFYPVE) is cleaved from the precursor. An N-acetylthreonine modification is found at Thr15. At Thr15 the chain carries Phosphothreonine. 5 helical membrane-spanning segments follow: residues 69-93 (LFEV…PHLA), 134-155 (LLGP…KDRN), 178-200 (KALY…RKIT), 255-275 (KPFA…LSYS), and 291-312 (WFNN…ASQA). Glu367 contacts [CaMn4O5] cluster. Residues 447 to 471 (RARAAAAGFEKGIDRDFEPVLSMTP) traverse the membrane as a helical segment.

This sequence belongs to the PsbB/PsbC family. PsbC subfamily. As to quaternary structure, PSII is composed of 1 copy each of membrane proteins PsbA, PsbB, PsbC, PsbD, PsbE, PsbF, PsbH, PsbI, PsbJ, PsbK, PsbL, PsbM, PsbT, PsbX, PsbY, PsbZ, Psb30/Ycf12, at least 3 peripheral proteins of the oxygen-evolving complex and a large number of cofactors. It forms dimeric complexes. Requires Binds multiple chlorophylls and provides some of the ligands for the Ca-4Mn-5O cluster of the oxygen-evolving complex. It may also provide a ligand for a Cl- that is required for oxygen evolution. PSII binds additional chlorophylls, carotenoids and specific lipids. as cofactor.

It localises to the plastid. It is found in the chloroplast thylakoid membrane. One of the components of the core complex of photosystem II (PSII). It binds chlorophyll and helps catalyze the primary light-induced photochemical processes of PSII. PSII is a light-driven water:plastoquinone oxidoreductase, using light energy to abstract electrons from H(2)O, generating O(2) and a proton gradient subsequently used for ATP formation. The sequence is that of Photosystem II CP43 reaction center protein from Piper cenocladum (Ant piper).